We begin with the raw amino-acid sequence, 88 residues long: Small ribosomal subunit protein uS15 (88 aa).

It belongs to the universal ribosomal protein uS15 family. Part of the 30S ribosomal subunit. Forms a bridge to the 50S subunit in the 70S ribosome, contacting the 23S rRNA.

In terms of biological role, one of the primary rRNA binding proteins, it binds directly to 16S rRNA where it helps nucleate assembly of the platform of the 30S subunit by binding and bridging several RNA helices of the 16S rRNA. Forms an intersubunit bridge (bridge B4) with the 23S rRNA of the 50S subunit in the ribosome. The chain is Small ribosomal subunit protein uS15 from Leptospira borgpetersenii serovar Hardjo-bovis (strain JB197).